The sequence spans 628 residues: Zinc finger protein 555 (628 aa).

Residues 4–77 (VVFEDVAVDF…ESKIATFTRN (74 aa)) enclose the KRAB domain. The segment at 172 to 194 (YQCQECGQAYSCRSHLRMHVRTH) adopts a C2H2-type 1; degenerate zinc-finger fold. 14 C2H2-type zinc fingers span residues 200 to 222 (YVCKLCGKTFPRTSSLNRHVRIH), 228 to 250 (YECKQCGKAFIDFSSLTSHLRSH), 256 to 278 (YKCKECGKAFSYSSTFRRHTITH), 284 to 306 (YKCKECAEAFSYSSTFRRHMISH), 312 to 334 (HKCKECGEAFSYSSAFRRHMITH), 340 to 362 (YECKQCGKTFIYLQSFRRHERIH), 368 to 390 (YECKQCGKTFIYPQSFRRHERTH), 396 to 418 (YECNQCGKAFSHPSSFRGHMRVH), 424 to 446 (YECKQCGKTFNWPISLRKHMRTH), 452 to 474 (YECKQCGKAFSLSACFREHVRMH), 480 to 502 (YECKLCGKAFYCHISLQKHMRRH), 508 to 530 (YKCKQCGKAFSWPELLQQHVRTH), 536 to 558 (YECKECGKVFKWPSSLPIHMRLH), and 564 to 586 (YQCKHCGKAFNCSSSLRRHVRIH).

It belongs to the krueppel C2H2-type zinc-finger protein family.

It localises to the nucleus. May be involved in transcriptional regulation. This Homo sapiens (Human) protein is Zinc finger protein 555 (ZNF555).